Reading from the N-terminus, the 144-residue chain is Small ribosomal subunit protein eS19B (144 aa).

This sequence belongs to the eukaryotic ribosomal protein eS19 family. In terms of assembly, component of the small ribosomal subunit (SSU). Mature yeast ribosomes consist of a small (40S) and a large (60S) subunit. The 40S small subunit contains 1 molecule of ribosomal RNA (18S rRNA) and 33 different proteins (encoded by 57 genes). The large 60S subunit contains 3 rRNA molecules (25S, 5.8S and 5S rRNA) and 46 different proteins (encoded by 81 genes).

It localises to the cytoplasm. Component of the ribosome, a large ribonucleoprotein complex responsible for the synthesis of proteins in the cell. The small ribosomal subunit (SSU) binds messenger RNAs (mRNAs) and translates the encoded message by selecting cognate aminoacyl-transfer RNA (tRNA) molecules. The large subunit (LSU) contains the ribosomal catalytic site termed the peptidyl transferase center (PTC), which catalyzes the formation of peptide bonds, thereby polymerizing the amino acids delivered by tRNAs into a polypeptide chain. The nascent polypeptides leave the ribosome through a tunnel in the LSU and interact with protein factors that function in enzymatic processing, targeting, and the membrane insertion of nascent chains at the exit of the ribosomal tunnel. eS19 is required for proper maturation of the small (40S) ribosomal subunit. Binds to 40S pre-ribosomal particles, probably required after association of NOC4 but before association of ENP1, TSR1 and RIO2 with 20/21S pre-rRNA. Its function is as follows. Required for proper maturation of the small (40S) ribosomal subunit. Binds to 40s pre-ribosomal particles, probably required after association of NOC4 but before association of ENP1, TSR1 and RIO2 with 20/21S pre-rRNA. The protein is Small ribosomal subunit protein eS19B of Saccharomyces cerevisiae (strain ATCC 204508 / S288c) (Baker's yeast).